A 258-amino-acid chain; its full sequence is MGLAKRIIPCLDIKDGRVVKGVNFVSLRDAGDPVEIARSYNEQGADELVFLDITASSENRDLILHIVEKVAAQVFIPLTVGGGVRKAEDVRRLLNAGADKVSINTSAVLNPMLIKESADHYGSQCIVIAIDARQIPDANPESPRWEVFTHGGRKPTGIDAIEWAQKIQALGAGEILLTSMDRDGTRSGFDLTLTRAISDSVDLPVIASGGVGHLDHLVEGILAGHADAVLAASIFHYGEYSILQAKQYLSSHGIEVRL.

Residues D12 and D131 contribute to the active site.

Belongs to the HisA/HisF family. Heterodimer of HisH and HisF.

It is found in the cytoplasm. The enzyme catalyses 5-[(5-phospho-1-deoxy-D-ribulos-1-ylimino)methylamino]-1-(5-phospho-beta-D-ribosyl)imidazole-4-carboxamide + L-glutamine = D-erythro-1-(imidazol-4-yl)glycerol 3-phosphate + 5-amino-1-(5-phospho-beta-D-ribosyl)imidazole-4-carboxamide + L-glutamate + H(+). It functions in the pathway amino-acid biosynthesis; L-histidine biosynthesis; L-histidine from 5-phospho-alpha-D-ribose 1-diphosphate: step 5/9. In terms of biological role, IGPS catalyzes the conversion of PRFAR and glutamine to IGP, AICAR and glutamate. The HisF subunit catalyzes the cyclization activity that produces IGP and AICAR from PRFAR using the ammonia provided by the HisH subunit. The chain is Imidazole glycerol phosphate synthase subunit HisF from Nitrosomonas europaea (strain ATCC 19718 / CIP 103999 / KCTC 2705 / NBRC 14298).